The primary structure comprises 548 residues: Thermolysin (548 aa).

Residues 1–28 (MKMKMKLASFGLAAGLAAQVFLPYNALA) form the signal peptide. The propeptide at 29 to 232 (STEHVTWNQQ…DAAKPGDVKS (204 aa)) is activation peptide. 4 residues coordinate Ca(2+): D289, D291, Q293, and D370. H374 is a binding site for Zn(2+). The active site involves E375. Zn(2+) contacts are provided by H378 and E398. 9 residues coordinate Ca(2+): E409, N415, D417, E419, E422, Y425, T426, I429, and D432. The Proton donor role is filled by H463.

Belongs to the peptidase M4 family. Ca(2+) is required as a cofactor. It depends on Zn(2+) as a cofactor.

The protein resides in the secreted. The enzyme catalyses Preferential cleavage: Xaa-|-Leu &gt; Xaa-|-Phe.. Extracellular zinc metalloprotease. This chain is Thermolysin (npr), found in Bacillus thermoproteolyticus.